The primary structure comprises 432 residues: Glutamyl-tRNA reductase (432 aa).

Residues 49 to 52 (TCNR), Ser101, 106 to 108 (EPQ), and Gln112 each bind substrate. Cys50 acts as the Nucleophile in catalysis. 181–186 (GAGETI) contributes to the NADP(+) binding site. The segment at 408 to 432 (PEKPGYRHPPVATPIVRTDDANPAP) is disordered.

Belongs to the glutamyl-tRNA reductase family. As to quaternary structure, homodimer.

It carries out the reaction (S)-4-amino-5-oxopentanoate + tRNA(Glu) + NADP(+) = L-glutamyl-tRNA(Glu) + NADPH + H(+). Its pathway is porphyrin-containing compound metabolism; protoporphyrin-IX biosynthesis; 5-aminolevulinate from L-glutamyl-tRNA(Glu): step 1/2. Catalyzes the NADPH-dependent reduction of glutamyl-tRNA(Glu) to glutamate 1-semialdehyde (GSA). This Xanthomonas campestris pv. campestris (strain B100) protein is Glutamyl-tRNA reductase.